A 211-amino-acid chain; its full sequence is Ribosomal RNA small subunit methyltransferase G (211 aa).

S-adenosyl-L-methionine is bound by residues Gly-74, Leu-79, 125–126 (AE), and Arg-140.

Belongs to the methyltransferase superfamily. RNA methyltransferase RsmG family.

It is found in the cytoplasm. Its function is as follows. Specifically methylates the N7 position of guanine in position 518 of 16S rRNA. The chain is Ribosomal RNA small subunit methyltransferase G from Clavibacter sepedonicus (Clavibacter michiganensis subsp. sepedonicus).